The primary structure comprises 194 residues: HTH-type transcriptional regulator BetI (194 aa).

Residues Pro8–Leu68 form the HTH tetR-type domain. A DNA-binding region (H-T-H motif) is located at residues Thr31–Phe50.

It participates in amine and polyamine biosynthesis; betaine biosynthesis via choline pathway [regulation]. In terms of biological role, repressor involved in the biosynthesis of the osmoprotectant glycine betaine. It represses transcription of the choline transporter BetT and the genes of BetAB involved in the synthesis of glycine betaine. The sequence is that of HTH-type transcriptional regulator BetI from Brucella anthropi (strain ATCC 49188 / DSM 6882 / CCUG 24695 / JCM 21032 / LMG 3331 / NBRC 15819 / NCTC 12168 / Alc 37) (Ochrobactrum anthropi).